A 349-amino-acid chain; its full sequence is MNSTLDGNQSSHPFCLLAFGYLETVNFCLLEVLIIVFLTVLIISGNIIVIFVFHCAPLLNHHTTSYFIQTMAYADLFVGVSCVVPSLSLLHHPLPVEESLTCQIFGFVVSVLKSVSMASLACISIDRYIAITKPLTYNTLVTPWRLRLCIFLIWLYSTLVFLPSFFHWGKPGYHGDVFQWCAESWHTDSYFTLFIVMMLYAPAALIVCFTYFNIFRICQQHTKDISERQARFSSQSGETGEVQACPDKRYAMVLFRITSVFYILWLPYIIYFLLESSTGHSNRFASFLTTWLAISNSFCNCVIYSLSNSVFQRGLKRLSGAMCTSCASQTTANDPYTVRSKGPLNGCHI.

Over 1–32 (MNSTLDGNQSSHPFCLLAFGYLETVNFCLLEV) the chain is Extracellular. 2 N-linked (GlcNAc...) asparagine glycosylation sites follow: N2 and N8. Residues 33–53 (LIIVFLTVLIISGNIIVIFVF) form a helical membrane-spanning segment. Over 54-75 (HCAPLLNHHTTSYFIQTMAYAD) the chain is Cytoplasmic. Residues 76–96 (LFVGVSCVVPSLSLLHHPLPV) form a helical membrane-spanning segment. The Extracellular segment spans residues 97 to 104 (EESLTCQI). A helical membrane pass occupies residues 105-125 (FGFVVSVLKSVSMASLACISI). The Cytoplasmic segment spans residues 126–147 (DRYIAITKPLTYNTLVTPWRLR). The helical transmembrane segment at 148–168 (LCIFLIWLYSTLVFLPSFFHW) threads the bilayer. At 169-191 (GKPGYHGDVFQWCAESWHTDSYF) the chain is on the extracellular side. A helical transmembrane segment spans residues 192–212 (TLFIVMMLYAPAALIVCFTYF). The Cytoplasmic portion of the chain corresponds to 213-252 (NIFRICQQHTKDISERQARFSSQSGETGEVQACPDKRYAM). A helical transmembrane segment spans residues 253–273 (VLFRITSVFYILWLPYIIYFL). Over 274–283 (LESSTGHSNR) the chain is Extracellular. A helical membrane pass occupies residues 284–304 (FASFLTTWLAISNSFCNCVIY). Topologically, residues 305-349 (SLSNSVFQRGLKRLSGAMCTSCASQTTANDPYTVRSKGPLNGCHI) are cytoplasmic.

It belongs to the G-protein coupled receptor 1 family. Not detected in the brain regions thalamus, putamen, caudate, frontal cortex, pons, hypothalamus, hippocampus.

It is found in the cell membrane. In terms of biological role, orphan receptor. The sequence is that of Probable G-protein coupled receptor 21 (GPR21) from Homo sapiens (Human).